Reading from the N-terminus, the 181-residue chain is MTVHHFTFHITDKSDASDIREVETRAFGFSKEADLVASLLEDESARPALSLLARYEGKAVGHILFTRATFKGEMDSPLMHILAPLAVIPEYQGMGVGGRLIRTGIEHLRLMGCQTVFVLGHATYYPRHGFEPCAGDKGYPAPYPIPEEHKACWMMQSLTAQPMTLTGHIRCADPDETGALT.

Positions 1 to 159 constitute an N-acetyltransferase domain; that stretch reads MTVHHFTFHI…KACWMMQSLT (159 aa).

The protein belongs to the acetyltransferase family.

This is an uncharacterized protein from Escherichia coli (strain K12).